The sequence spans 101 residues: MLVLFVLSLVVSCALCQTFQYSRGWTNGKRSNFPAEISALGYDRFTNGELKRLKMLIYGSADEQPLLIHCDFVDKLKKFAHTDNAEPDQLRREKAPNNDNY.

An N-terminal signal peptide occupies residues 1 to 16 (MLVLFVLSLVVSCALC). Asn27 carries the post-translational modification Asparagine amide. Residues 31-101 (SNFPAEISAL…REKAPNNDNY (71 aa)) constitute a propeptide that is removed on maturation.

It belongs to the corazonin family. In terms of tissue distribution, expressed in central brain and the retrocerebral complex but not in antennal lobes, optic lobes or in gnathal, thoracic and abdominal ganglia (at protein level).

The protein resides in the secreted. Its function is as follows. Cardioactive peptide. Corazonin is probably involved in the physiological regulation of the heart beat. The polypeptide is Pro-corazonin (Camponotus floridanus (Florida carpenter ant)).